A 368-amino-acid polypeptide reads, in one-letter code: Alanine racemase (368 aa).

K40 functions as the Proton acceptor; specific for D-alanine in the catalytic mechanism. K40 is modified (N6-(pyridoxal phosphate)lysine). Position 134 (R134) interacts with substrate. Y263 functions as the Proton acceptor; specific for L-alanine in the catalytic mechanism. A substrate-binding site is contributed by M310.

This sequence belongs to the alanine racemase family. Pyridoxal 5'-phosphate serves as cofactor.

It carries out the reaction L-alanine = D-alanine. It functions in the pathway amino-acid biosynthesis; D-alanine biosynthesis; D-alanine from L-alanine: step 1/1. Its function is as follows. Catalyzes the interconversion of L-alanine and D-alanine. May also act on other amino acids. This chain is Alanine racemase (alr), found in Listeria monocytogenes serotype 4b (strain F2365).